The chain runs to 29 residues: uncharacterized protein (29 aa).

The interval 1-29 (MFKMKFGDTLPRSDFGTGGNKQAPGLELG) is disordered.

This is an uncharacterized protein from Saccharomyces cerevisiae (strain ATCC 204508 / S288c) (Baker's yeast).